Here is a 208-residue protein sequence, read N- to C-terminus: Uracil phosphoribosyltransferase (208 aa).

Residues Arg78, Arg103, and 130 to 138 (DPMLATGGS) contribute to the 5-phospho-alpha-D-ribose 1-diphosphate site. Uracil-binding positions include Ile193 and 198–200 (GDA). 5-phospho-alpha-D-ribose 1-diphosphate is bound at residue Asp199.

This sequence belongs to the UPRTase family. It depends on Mg(2+) as a cofactor.

It catalyses the reaction UMP + diphosphate = 5-phospho-alpha-D-ribose 1-diphosphate + uracil. It functions in the pathway pyrimidine metabolism; UMP biosynthesis via salvage pathway; UMP from uracil: step 1/1. Its activity is regulated as follows. Allosterically activated by GTP. In terms of biological role, catalyzes the conversion of uracil and 5-phospho-alpha-D-ribose 1-diphosphate (PRPP) to UMP and diphosphate. This chain is Uracil phosphoribosyltransferase, found in Histophilus somni (strain 129Pt) (Haemophilus somnus).